The following is a 106-amino-acid chain: Nucleoid-associated protein Fjoh_2555 (106 aa).

Belongs to the YbaB/EbfC family. In terms of assembly, homodimer.

It localises to the cytoplasm. The protein localises to the nucleoid. In terms of biological role, binds to DNA and alters its conformation. May be involved in regulation of gene expression, nucleoid organization and DNA protection. This Flavobacterium johnsoniae (strain ATCC 17061 / DSM 2064 / JCM 8514 / BCRC 14874 / CCUG 350202 / NBRC 14942 / NCIMB 11054 / UW101) (Cytophaga johnsonae) protein is Nucleoid-associated protein Fjoh_2555.